A 425-amino-acid chain; its full sequence is Serine--tRNA ligase (425 aa).

233 to 235 (TAE) provides a ligand contact to L-serine. ATP is bound at residue 264–266 (RRE). Glu-287 is an L-serine binding site. Residue 351 to 354 (EISS) coordinates ATP. Ser-385 is an L-serine binding site.

Belongs to the class-II aminoacyl-tRNA synthetase family. Type-1 seryl-tRNA synthetase subfamily. As to quaternary structure, homodimer. The tRNA molecule binds across the dimer.

The protein localises to the cytoplasm. The catalysed reaction is tRNA(Ser) + L-serine + ATP = L-seryl-tRNA(Ser) + AMP + diphosphate + H(+). It catalyses the reaction tRNA(Sec) + L-serine + ATP = L-seryl-tRNA(Sec) + AMP + diphosphate + H(+). It participates in aminoacyl-tRNA biosynthesis; selenocysteinyl-tRNA(Sec) biosynthesis; L-seryl-tRNA(Sec) from L-serine and tRNA(Sec): step 1/1. Its function is as follows. Catalyzes the attachment of serine to tRNA(Ser). Is also able to aminoacylate tRNA(Sec) with serine, to form the misacylated tRNA L-seryl-tRNA(Sec), which will be further converted into selenocysteinyl-tRNA(Sec). The sequence is that of Serine--tRNA ligase from Parasynechococcus marenigrum (strain WH8102).